Here is a 324-residue protein sequence, read N- to C-terminus: D-alanine--D-alanine ligase (324 aa).

The ATP-grasp domain occupies 120–322 (NNYLRGFGVE…LKEILTEIIE (203 aa)). 149-204 (IDKLGLPLIVKPNDGGSSFGVTKVTNITQIQLAIRNAFNEGEGVLIESFIPGTEIT) serves as a coordination point for ATP. The Mg(2+) site is built by Asp276, Glu289, and Asn291.

This sequence belongs to the D-alanine--D-alanine ligase family. Mg(2+) serves as cofactor. The cofactor is Mn(2+).

The protein localises to the cytoplasm. It carries out the reaction 2 D-alanine + ATP = D-alanyl-D-alanine + ADP + phosphate + H(+). The protein operates within cell wall biogenesis; peptidoglycan biosynthesis. Functionally, cell wall formation. The chain is D-alanine--D-alanine ligase from Azobacteroides pseudotrichonymphae genomovar. CFP2.